The sequence spans 556 residues: Hydroxylamine reductase (556 aa).

4 residues coordinate [4Fe-4S] cluster: Cys-5, Cys-8, Cys-17, and Cys-23. Residues His-249, Glu-273, Cys-317, Cys-409, Cys-437, Cys-462, Glu-497, and Lys-499 each coordinate hybrid [4Fe-2O-2S] cluster. Cys-409 is subject to Cysteine persulfide.

The protein belongs to the HCP family. [4Fe-4S] cluster serves as cofactor. The cofactor is hybrid [4Fe-2O-2S] cluster.

Its subcellular location is the cytoplasm. It carries out the reaction A + NH4(+) + H2O = hydroxylamine + AH2 + H(+). Functionally, catalyzes the reduction of hydroxylamine to form NH(3) and H(2)O. This is Hydroxylamine reductase from Kosmotoga olearia (strain ATCC BAA-1733 / DSM 21960 / TBF 19.5.1).